The sequence spans 653 residues: Epithelial sodium channel subunit gamma (653 aa).

The Cytoplasmic segment spans residues 1-54; sequence MGHGRRISESIKKQLPVTGPEAPTVKNLMDWYLNNTNTHGCRRIAVSRGYLRRW. The helical transmembrane segment at 55–75 threads the bilayer; it reads IWICFTVSSVGMIFWQWTLLL. The Extracellular segment spans residues 76–546; sequence MSYYTVSVSV…GGQLGLWMSC (471 aa). Cystine bridges form between C100-C290, C214-C221, C267-C274, C379-C464, C401-C460, C405-C456, C414-C441, and C416-C430. Residues 547–567 traverse the membrane as a helical segment; it reads SIVCFLEMWEVFLVDILTIIA. Residues 568-653 lie on the Cytoplasmic side of the membrane; it reads RYWLHRGRQW…DEQVSDTEVN (86 aa). The interval 582–608 is disordered; sequence KERQMQQPSPPDHDTGHHNPVCIDDED.

The protein belongs to the amiloride-sensitive sodium channel (TC 1.A.6) family. SCNN1G subfamily. Component of the heterotrimeric epithelial sodium channel (ENaC) composed of an alpha/SCNN1A, a beta/SCNN1B and a gamma/SCNN1G subunit. As to expression, strongly expressed in gill, liver, kidney and rectum and more weakly in heart, muscle and intestine.

It localises to the apical cell membrane. It catalyses the reaction Na(+)(in) = Na(+)(out). With respect to regulation, originally identified and characterized by its inhibition by the diuretic drug amiloride. Functionally, this is one of the three pore-forming subunits of the heterotrimeric epithelial sodium channel (ENaC), a critical regulator of sodium balance and fluid homeostasis. ENaC operates in epithelial tissues, where it mediates the electrodiffusion of sodium ions from extracellular fluid through the apical membrane of cells, with water following osmotically. The sequence is that of Epithelial sodium channel subunit gamma from Neoceratodus forsteri (Australian lungfish).